Here is a 305-residue protein sequence, read N- to C-terminus: Aspartate carbamoyltransferase catalytic subunit (305 aa).

Residues Arg51 and Thr52 each coordinate carbamoyl phosphate. Lys79 is an L-aspartate binding site. Carbamoyl phosphate-binding residues include Arg101, His130, and Gln133. L-aspartate contacts are provided by Arg163 and Arg215. Positions 256 and 257 each coordinate carbamoyl phosphate.

This sequence belongs to the aspartate/ornithine carbamoyltransferase superfamily. ATCase family. Heterododecamer (2C3:3R2) of six catalytic PyrB chains organized as two trimers (C3), and six regulatory PyrI chains organized as three dimers (R2).

It carries out the reaction carbamoyl phosphate + L-aspartate = N-carbamoyl-L-aspartate + phosphate + H(+). It functions in the pathway pyrimidine metabolism; UMP biosynthesis via de novo pathway; (S)-dihydroorotate from bicarbonate: step 2/3. Functionally, catalyzes the condensation of carbamoyl phosphate and aspartate to form carbamoyl aspartate and inorganic phosphate, the committed step in the de novo pyrimidine nucleotide biosynthesis pathway. This chain is Aspartate carbamoyltransferase catalytic subunit, found in Ehrlichia canis (strain Jake).